The primary structure comprises 208 residues: MSEPEKLTKSKDVIAYLAEQFPDCFTIKGDAKPLKIGIFEDLAKRLEDDDKVSKTRLRTALRHYTNSWRYLYSVKTGAQRVNLDGEQVEAVTEEHQQHAQETLKESKAKVAEKNKATNKAAAKKAPAKDKPENTAKAKPKTAKKPAKPKVKLADVELNKLSVGQQVQVKAGNTPMSATVLELDKDDVQVQLQNGLIMKVKADKIFLRA.

2 stretches are compositionally biased toward basic and acidic residues: residues 99–115 and 126–135; these read AQET…EKNK and PAKDKPENTA. The interval 99 to 149 is disordered; that stretch reads AQETLKESKAKVAEKNKATNKAAAKKAPAKDKPENTAKAKPKTAKKPAKPK. Over residues 137–149 the composition is skewed to basic residues; it reads AKPKTAKKPAKPK.

It belongs to the ProQ family.

It localises to the cytoplasm. RNA chaperone with significant RNA binding, RNA strand exchange and RNA duplexing activities. The polypeptide is RNA chaperone ProQ (Idiomarina loihiensis (strain ATCC BAA-735 / DSM 15497 / L2-TR)).